The primary structure comprises 214 residues: ATP phosphoribosyltransferase (214 aa).

Belongs to the ATP phosphoribosyltransferase family. Short subfamily. Heteromultimer composed of HisG and HisZ subunits.

It is found in the cytoplasm. It catalyses the reaction 1-(5-phospho-beta-D-ribosyl)-ATP + diphosphate = 5-phospho-alpha-D-ribose 1-diphosphate + ATP. Its pathway is amino-acid biosynthesis; L-histidine biosynthesis; L-histidine from 5-phospho-alpha-D-ribose 1-diphosphate: step 1/9. Functionally, catalyzes the condensation of ATP and 5-phosphoribose 1-diphosphate to form N'-(5'-phosphoribosyl)-ATP (PR-ATP). Has a crucial role in the pathway because the rate of histidine biosynthesis seems to be controlled primarily by regulation of HisG enzymatic activity. The protein is ATP phosphoribosyltransferase of Deinococcus deserti (strain DSM 17065 / CIP 109153 / LMG 22923 / VCD115).